A 418-amino-acid polypeptide reads, in one-letter code: Serum response factor homolog A (418 aa).

Disordered regions lie at residues 14–67 (LGNV…GKKA), 144–170 (CLNT…LLQQ), 301–351 (RLGK…NNNS), and 388–418 (SSSS…FPPC). Low complexity-rich tracts occupy residues 22–39 (PSSP…PTST) and 51–61 (TSEPSSPSTGE). The 61-residue stretch at 67–127 (AGRRKIKIEF…GHVYTFATAK (61 aa)) folds into the MADS-box domain. Composition is skewed to low complexity over residues 150 to 170 (NPNS…LLQQ), 306 to 351 (NNNN…NNNS), and 388 to 399 (SSSSASSSPASP). Residues 400-418 (NQFNYSNHSMPLNNQFPPC) show a composition bias toward polar residues.

It is found in the nucleus. Required for proper slug migration, spore differentiation and stalk differentiation (under nonbuffered conditions). Could be involved in late events of spore maturation necessary for spore stability. The polypeptide is Serum response factor homolog A (srfA) (Dictyostelium discoideum (Social amoeba)).